The chain runs to 666 residues: Probable potassium transport system protein Kup (666 aa).

The next 12 helical transmembrane spans lie at 53–73 (FWALTLGSIGVVFGDIGTSPL), 89–109 (VTPVIVLGVLSLILWSLFIVV), 144–164 (LLLLALGVVGASMFIGDSMIT), 181–201 (PEFGNYVVPLTLLILVMLFAV), 212–232 (AFAPVMALWFVAIAVLGALHI), 247–267 (AIHFLLNHGLIGLVIMGLVFL), 291–311 (WFCLVLPALLLNYFGQGALIL), 324–344 (LAPAPMILPLVILATAATVIA), 381–401 (IYLPRVNILLLIGVLLLVLLF), 411–431 (YGIAVSTTMVADGIMGFVVVW), 441–461 (AAALVVPLVVVDIMFFSANLL), and 463–483 (LLDGAWVPLLFGLIMVVLIWT).

The protein belongs to the HAK/KUP transporter (TC 2.A.72) family.

It localises to the cell inner membrane. The catalysed reaction is K(+)(in) + H(+)(in) = K(+)(out) + H(+)(out). Transport of potassium into the cell. Likely operates as a K(+):H(+) symporter. The chain is Probable potassium transport system protein Kup from Nitrobacter hamburgensis (strain DSM 10229 / NCIMB 13809 / X14).